Here is a 352-residue protein sequence, read N- to C-terminus: DNA polymerase IV (352 aa).

Residues 6–186 (IIHIDMDAFY…LPLGKIPGVG (181 aa)) enclose the UmuC domain. Mg(2+) is bound by residues Asp-10 and Asp-104. The active site involves Glu-105.

The protein belongs to the DNA polymerase type-Y family. Monomer. Mg(2+) is required as a cofactor.

Its subcellular location is the cytoplasm. The enzyme catalyses DNA(n) + a 2'-deoxyribonucleoside 5'-triphosphate = DNA(n+1) + diphosphate. Poorly processive, error-prone DNA polymerase involved in untargeted mutagenesis. Copies undamaged DNA at stalled replication forks, which arise in vivo from mismatched or misaligned primer ends. These misaligned primers can be extended by PolIV. Exhibits no 3'-5' exonuclease (proofreading) activity. May be involved in translesional synthesis, in conjunction with the beta clamp from PolIII. The chain is DNA polymerase IV from Neisseria meningitidis serogroup C / serotype 2a (strain ATCC 700532 / DSM 15464 / FAM18).